The chain runs to 757 residues: 5-methyltetrahydropteroyltriglutamate--homocysteine methyltransferase (757 aa).

5-methyltetrahydropteroyltri-L-glutamate contacts are provided by residues 15–18 and Lys114; that span reads RELK. L-homocysteine contacts are provided by residues 428–430 and Glu481; that span reads IGS. L-methionine contacts are provided by residues 428-430 and Glu481; that span reads IGS. 5-methyltetrahydropteroyltri-L-glutamate contacts are provided by residues 512–513 and Trp558; that span reads RC. Position 596 (Asp596) interacts with L-homocysteine. Asp596 lines the L-methionine pocket. Glu602 lines the 5-methyltetrahydropteroyltri-L-glutamate pocket. Zn(2+) contacts are provided by His639, Cys641, and Glu663. Catalysis depends on His692, which acts as the Proton donor. Cys724 contributes to the Zn(2+) binding site.

It belongs to the vitamin-B12 independent methionine synthase family. It depends on Zn(2+) as a cofactor.

The enzyme catalyses 5-methyltetrahydropteroyltri-L-glutamate + L-homocysteine = tetrahydropteroyltri-L-glutamate + L-methionine. The protein operates within amino-acid biosynthesis; L-methionine biosynthesis via de novo pathway; L-methionine from L-homocysteine (MetE route): step 1/1. Functionally, catalyzes the transfer of a methyl group from 5-methyltetrahydrofolate to homocysteine resulting in methionine formation. In Lactococcus lactis subsp. cremoris (strain MG1363), this protein is 5-methyltetrahydropteroyltriglutamate--homocysteine methyltransferase.